A 674-amino-acid chain; its full sequence is F420-dependent formate dehydrogenase 1 subunit alpha (674 aa).

The 4Fe-4S Mo/W bis-MGD-type domain occupies 3–59 (LDFIHTICPYCGTGCGVDLVVKDGTLVGTNPFKRHPVNEGKTCIKGSYCHEFVHRDD). 4 residues coordinate [4Fe-4S] cluster: Cys10, Cys13, Cys17, and Cys45. Residue Sec132 is a non-standard amino acid, selenocysteine.

The protein belongs to the prokaryotic molybdopterin-containing oxidoreductase family. As to quaternary structure, dimer of an alpha (FdhA1) and a beta (FdhB1) subunit. [4Fe-4S] cluster is required as a cofactor. Mo-bis(molybdopterin guanine dinucleotide) serves as cofactor. It depends on Zn(2+) as a cofactor.

It catalyses the reaction oxidized coenzyme F420-(gamma-L-Glu)(n) + formate + 2 H(+) = reduced coenzyme F420-(gamma-L-Glu)(n) + CO2. Its function is as follows. Catalyzes the oxidation of formate to carbon dioxide, with coenzyme F420 as the electron acceptor. In vitro can also use methyl viologen as electron acceptor. The polypeptide is F420-dependent formate dehydrogenase 1 subunit alpha (Methanococcus maripaludis (strain DSM 14266 / JCM 13030 / NBRC 101832 / S2 / LL)).